The primary structure comprises 169 residues: 2-C-methyl-D-erythritol 2,4-cyclodiphosphate synthase (169 aa).

Aspartate 13 and histidine 15 together coordinate a divalent metal cation. Residues 13–15 (DVH) and 39–40 (HS) contribute to the 4-CDP-2-C-methyl-D-erythritol 2-phosphate site. Position 47 (histidine 47) interacts with a divalent metal cation. Residues 61–63 (DIG), 66–70 (FPDTD), phenylalanine 144, and arginine 147 each bind 4-CDP-2-C-methyl-D-erythritol 2-phosphate.

The protein belongs to the IspF family. In terms of assembly, homotrimer. A divalent metal cation serves as cofactor.

The enzyme catalyses 4-CDP-2-C-methyl-D-erythritol 2-phosphate = 2-C-methyl-D-erythritol 2,4-cyclic diphosphate + CMP. Its pathway is isoprenoid biosynthesis; isopentenyl diphosphate biosynthesis via DXP pathway; isopentenyl diphosphate from 1-deoxy-D-xylulose 5-phosphate: step 4/6. Functionally, involved in the biosynthesis of isopentenyl diphosphate (IPP) and dimethylallyl diphosphate (DMAPP), two major building blocks of isoprenoid compounds. Catalyzes the conversion of 4-diphosphocytidyl-2-C-methyl-D-erythritol 2-phosphate (CDP-ME2P) to 2-C-methyl-D-erythritol 2,4-cyclodiphosphate (ME-CPP) with a corresponding release of cytidine 5-monophosphate (CMP). The sequence is that of 2-C-methyl-D-erythritol 2,4-cyclodiphosphate synthase from Cupriavidus pinatubonensis (strain JMP 134 / LMG 1197) (Cupriavidus necator (strain JMP 134)).